We begin with the raw amino-acid sequence, 474 residues long: Cysteine--tRNA ligase (474 aa).

Zn(2+) is bound at residue cysteine 27. Residues 29–39 (ITPYDHMHVGH) carry the 'HIGH' region motif. Residues cysteine 213, histidine 238, and glutamate 242 each coordinate Zn(2+). The 'KMSKS' region motif lies at 271 to 275 (KMSKS). Lysine 274 is a binding site for ATP.

The protein belongs to the class-I aminoacyl-tRNA synthetase family. Zn(2+) serves as cofactor.

The protein localises to the cytoplasm. It carries out the reaction tRNA(Cys) + L-cysteine + ATP = L-cysteinyl-tRNA(Cys) + AMP + diphosphate. This Pyrobaculum neutrophilum (strain DSM 2338 / JCM 9278 / NBRC 100436 / V24Sta) (Thermoproteus neutrophilus) protein is Cysteine--tRNA ligase.